We begin with the raw amino-acid sequence, 337 residues long: Lipoyl synthase (337 aa).

[4Fe-4S] cluster contacts are provided by Cys81, Cys86, Cys92, Cys107, Cys111, Cys114, and Ser323. The region spanning Phe93–Ser312 is the Radical SAM core domain.

Belongs to the radical SAM superfamily. Lipoyl synthase family. [4Fe-4S] cluster is required as a cofactor.

Its subcellular location is the cytoplasm. It carries out the reaction [[Fe-S] cluster scaffold protein carrying a second [4Fe-4S](2+) cluster] + N(6)-octanoyl-L-lysyl-[protein] + 2 oxidized [2Fe-2S]-[ferredoxin] + 2 S-adenosyl-L-methionine + 4 H(+) = [[Fe-S] cluster scaffold protein] + N(6)-[(R)-dihydrolipoyl]-L-lysyl-[protein] + 4 Fe(3+) + 2 hydrogen sulfide + 2 5'-deoxyadenosine + 2 L-methionine + 2 reduced [2Fe-2S]-[ferredoxin]. Its pathway is protein modification; protein lipoylation via endogenous pathway; protein N(6)-(lipoyl)lysine from octanoyl-[acyl-carrier-protein]: step 2/2. Catalyzes the radical-mediated insertion of two sulfur atoms into the C-6 and C-8 positions of the octanoyl moiety bound to the lipoyl domains of lipoate-dependent enzymes, thereby converting the octanoylated domains into lipoylated derivatives. In Xanthomonas axonopodis pv. citri (strain 306), this protein is Lipoyl synthase.